We begin with the raw amino-acid sequence, 234 residues long: MEYTRETMQKMRREELKNIAISYRIYNGYHERPISKMRKSDFIDFIHESVTTPNHSPNTRETILQNANRQEGRRRGLRPSSDGNLRRENRHNEDVIVHFIPSPLSSRHSPISFRDTLRDFDARRRIDFGSSLMGGPLGLLDVVINVLNSTSLDDEEQHELNNEEFTGTIPTEVEEENEAHETVRCAVCLHNKVCVLFQKCKHVITCGPCSLRIKECPVCKRIVESSDKIRIFLP.

A disordered region spans residues glutamine 65–asparagine 89. The segment at cysteine 185–lysine 220 adopts an RING-type zinc-finger fold.

Belongs to the IIV-6 175R/332L family.

This is an uncharacterized protein from Acheta domesticus (House cricket).